Consider the following 181-residue polypeptide: Large ribosomal subunit protein uL6 (181 aa).

This sequence belongs to the universal ribosomal protein uL6 family. As to quaternary structure, part of the 50S ribosomal subunit.

In terms of biological role, this protein binds to the 23S rRNA, and is important in its secondary structure. It is located near the subunit interface in the base of the L7/L12 stalk, and near the tRNA binding site of the peptidyltransferase center. This Vesicomyosocius okutanii subsp. Calyptogena okutanii (strain HA) protein is Large ribosomal subunit protein uL6.